Consider the following 506-residue polypeptide: Lysine--tRNA ligase (506 aa).

The Mg(2+) site is built by Glu-416 and Glu-423.

This sequence belongs to the class-II aminoacyl-tRNA synthetase family. In terms of assembly, homodimer. Mg(2+) is required as a cofactor.

The protein localises to the cytoplasm. The catalysed reaction is tRNA(Lys) + L-lysine + ATP = L-lysyl-tRNA(Lys) + AMP + diphosphate. The sequence is that of Lysine--tRNA ligase from Pelotomaculum thermopropionicum (strain DSM 13744 / JCM 10971 / SI).